We begin with the raw amino-acid sequence, 551 residues long: Tetrachloroethene reductive dehalogenase (551 aa).

Positions 1-39 form a signal peptide, tat-type signal; it reads MGEINRRNFLKASMLGAAAAAVASASVVKGVVSPLVADA. Residues 411–440 enclose the 4Fe-4S ferredoxin-type 1 domain; the sequence is PRKFGVREFCRLCKKCADACPAQAISHEKD. Cysteine 420, cysteine 423, cysteine 426, cysteine 430, cysteine 467, cysteine 478, cysteine 481, and cysteine 485 together coordinate [4Fe-4S] cluster. Residues 478–496 form the 4Fe-4S ferredoxin-type 2 domain; sequence CSNCVAVCSWNKVETWNHD.

Belongs to the PceA family. It depends on [4Fe-4S] cluster as a cofactor. Requires corrinoid as cofactor. Predicted to be exported by the Tat system. The position of the signal peptide cleavage has been experimentally proven.

It localises to the cell membrane. It carries out the reaction trichloroethene + chloride + A + H(+) = tetrachloroethene + AH2. The enzyme catalyses trichloroethene + AH2 = (Z)-1,2-dichloroethene + chloride + A + H(+). Its function is as follows. Catalyzes the reductive dechlorination of tetrachloroethene (PCE) to trichloroethene (TCE) and of trichloroethene to cis-1,2-dichloroethene (DCE). Reduced methyl viologen can act as the artificial electron donor. This is Tetrachloroethene reductive dehalogenase from Desulfitobacterium hafniense (Desulfitobacterium frappieri).